Reading from the N-terminus, the 228-residue chain is FCS-Like Zinc finger 12 (228 aa).

The FLZ-type zinc-finger motif lies at 162 to 205; it reads DFLTSCCLCKKKLQGKDIYMYKGDEGFCSKECRSLKIMEDSLKE.

Belongs to the FLZ family. Interacts with KIN10 and KIN11 via its FLZ-type zinc finger domain. Interacts with KINB1 and KINB2 via its N-terminal part. Forms homodimer and heterodimer with FLZ2 and FLZ10 in vitro.

Its function is as follows. May act as an adapter to facilitate the interaction of SnRK1 complex with effector proteins, conferring tissue- and stimulus-type specific differences in the SnRK1 regulation pathway. The protein is FCS-Like Zinc finger 12 of Arabidopsis thaliana (Mouse-ear cress).